A 346-amino-acid chain; its full sequence is Histidinol-phosphate aminotransferase (346 aa).

Lys-209 carries the N6-(pyridoxal phosphate)lysine modification.

The protein belongs to the class-II pyridoxal-phosphate-dependent aminotransferase family. Histidinol-phosphate aminotransferase subfamily. As to quaternary structure, homodimer. Pyridoxal 5'-phosphate is required as a cofactor.

It carries out the reaction L-histidinol phosphate + 2-oxoglutarate = 3-(imidazol-4-yl)-2-oxopropyl phosphate + L-glutamate. It functions in the pathway amino-acid biosynthesis; L-histidine biosynthesis; L-histidine from 5-phospho-alpha-D-ribose 1-diphosphate: step 7/9. The sequence is that of Histidinol-phosphate aminotransferase from Vibrio campbellii (strain ATCC BAA-1116).